The primary structure comprises 196 residues: FMN-dependent NADH:quinone oxidoreductase (196 aa).

Ser10 provides a ligand contact to FMN.

The protein belongs to the azoreductase type 1 family. Homodimer. It depends on FMN as a cofactor.

The enzyme catalyses 2 a quinone + NADH + H(+) = 2 a 1,4-benzosemiquinone + NAD(+). It catalyses the reaction N,N-dimethyl-1,4-phenylenediamine + anthranilate + 2 NAD(+) = 2-(4-dimethylaminophenyl)diazenylbenzoate + 2 NADH + 2 H(+). Its function is as follows. Quinone reductase that provides resistance to thiol-specific stress caused by electrophilic quinones. Functionally, also exhibits azoreductase activity. Catalyzes the reductive cleavage of the azo bond in aromatic azo compounds to the corresponding amines. In Cereibacter sphaeroides (strain KD131 / KCTC 12085) (Rhodobacter sphaeroides), this protein is FMN-dependent NADH:quinone oxidoreductase.